Consider the following 262-residue polypeptide: Ninja-family protein 3 (262 aa).

Residues 48 to 69 form a disordered region; it reads RRNSLTCNTSKEAAGQSPEEMN.

The protein belongs to the Ninja family.

It is found in the nucleus. The polypeptide is Ninja-family protein 3 (Zea mays (Maize)).